The following is a 153-amino-acid chain: Profilin (153 aa).

Belongs to the profilin family. In terms of assembly, occurs in many kinds of cells as a complex with monomeric actin in a 1:1 ratio.

The protein resides in the cytoplasm. It is found in the cytoskeleton. Functionally, binds to actin and affects the structure of the cytoskeleton. At high concentrations, profilin prevents the polymerization of actin, whereas it enhances it at low concentrations. By binding to PIP2, it inhibits the formation of IP3 and DG. This Tetrahymena pyriformis protein is Profilin.